Here is a 459-residue protein sequence, read N- to C-terminus: Endoglucanase EG-1 (459 aa).

A signal peptide spans 1-22 (MAPSVTLPLTTAILAIARLVAA). Gln23 bears the Pyrrolidone carboxylic acid mark. The catalytic stretch occupies residues 23 to 397 (QQPGTSTPEV…DIGSTTNSTA (375 aa)). 8 disulfides stabilise this stretch: Cys41-Cys47, Cys71-Cys92, Cys82-Cys88, Cys161-Cys360, Cys193-Cys216, Cys197-Cys215, Cys236-Cys241, and Cys246-Cys315. Asn78 is a glycosylation site (N-linked (GlcNAc) asparagine). Asn204 is a glycosylation site (N-linked (GlcNAc...) (high mannose) asparagine). The active-site Nucleophile is Glu218. The Proton donor/acceptor role is filled by Glu223. The tract at residues 390–425 (GSTTNSTAPPPPPASSTTFSTTRRSSTTSSSPSCTQ) is disordered. A glycan (N-linked (GlcNAc...) asparagine) is linked at Asn394. The segment at 398-423 (PPPPPASSTTFSTTRRSSTTSSSPSC) is linker. The span at 404-425 (SSTTFSTTRRSSTTSSSPSCTQ) shows a compositional bias: low complexity. 3 disulfide bridges follow: Cys423/Cys439, Cys431/Cys448, and Cys442/Cys458. Residues 423–459 (CTQTHWGQCGGIGYSGCKTCTSGTTCQYSNDYYSQCL) form the CBM1 domain.

It belongs to the glycosyl hydrolase 7 (cellulase C) family. Post-translationally, asn-204 contains mainly a high-mannose-type glycan (Hex(7-9)GlcNAc(2)), with a small fraction (8%) bearing a single GlcNAc at this site.

The protein localises to the secreted. It carries out the reaction Endohydrolysis of (1-&gt;4)-beta-D-glucosidic linkages in cellulose, lichenin and cereal beta-D-glucans.. Functionally, endoglucanase (EG) that cleaves the internal beta-1,4-glucosidic bonds in cellulose. The degradation of cellulose involves an interplay between different cellulolytic enzymes. Hydrolysis starts with EGs, which cut internal glycosidic linkages to reduce the polymerization degree of the substrate and creates new chain ends for exocellobiohydrolases (CBHs). The CBH release the disaccharide cellobiose from the non-reducing end of the cellulose polymer chain. Finally, beta-1,4-glucosidases hydrolyze the cellobiose and other short cello-oligosaccharides into glucose units. The sequence is that of Endoglucanase EG-1 (egl1) from Hypocrea jecorina (Trichoderma reesei).